Consider the following 932-residue polypeptide: UPF0182 protein Dred_1797 (932 aa).

Transmembrane regions (helical) follow at residues 11–31 (LVILAGALLFSLIGWGAGLYI), 53–73 (IGLRVLVGIIMFLLLLINLML), 118–138 (LTLAFTLLSMALGFLYSSSVA), 180–200 (ILASAIFLNIVLVALVYLVTD), 209–229 (IFRFPSARYHLSVLAALFFVI), 264–284 (YKALMILSLVTAIIIIANIFL), and 292–312 (YAIGGLLVTSILLGSVYPAII). A disordered region spans residues 861 to 883 (DRPQQGVPPATDQPAGQQPAPEK).

It belongs to the UPF0182 family.

It localises to the cell membrane. In Desulforamulus reducens (strain ATCC BAA-1160 / DSM 100696 / MI-1) (Desulfotomaculum reducens), this protein is UPF0182 protein Dred_1797.